Here is a 312-residue protein sequence, read N- to C-terminus: Formate dehydrogenase iron-sulfur subunit (312 aa).

4Fe-4S ferredoxin-type domains are found at residues 35 to 65 (IAKLIDVSTCIGCKACQVGCSEWNDIRSDIN), 97 to 129 (LEWLIRKDGCMHCTEPGCLKACPAPGAIIQYAN), 130 to 159 (GIVDFQSDKCIGCGYCIAGCPFNIPRMNPE), and 164 to 195 (YKCTLCVDRVSVGQEPACVKTCPTGAIRFGSK). [4Fe-4S] cluster is bound by residues cysteine 44, cysteine 47, cysteine 50, cysteine 54, cysteine 106, cysteine 109, cysteine 114, cysteine 118, cysteine 139, cysteine 142, cysteine 145, cysteine 149, cysteine 166, cysteine 169, cysteine 181, and cysteine 185.

As to quaternary structure, formate dehydrogenase is a membrane-bound complex, formed by subunits alpha, beta and gamma. [4Fe-4S] cluster is required as a cofactor.

It is found in the cell membrane. Functionally, allows to use formate as major electron donor during aerobic respiration. The beta chain is an electron transfer unit containing 4 cysteine clusters involved in the formation of iron-sulfur centers. Electrons are transferred from the gamma chain to the molybdenum cofactor of the alpha subunit. The protein is Formate dehydrogenase iron-sulfur subunit (fdxH) of Haemophilus influenzae (strain ATCC 51907 / DSM 11121 / KW20 / Rd).